The primary structure comprises 75 residues: MEEVPFENAMQRLEEIVDLMNQPTTSLDASLALYEEADALMRICESRIRQVEQRVRELAEKRHESSLFEEQAVVR.

This sequence belongs to the XseB family. Heterooligomer composed of large and small subunits.

It localises to the cytoplasm. The catalysed reaction is Exonucleolytic cleavage in either 5'- to 3'- or 3'- to 5'-direction to yield nucleoside 5'-phosphates.. Bidirectionally degrades single-stranded DNA into large acid-insoluble oligonucleotides, which are then degraded further into small acid-soluble oligonucleotides. This chain is Exodeoxyribonuclease 7 small subunit, found in Chlamydia pneumoniae (Chlamydophila pneumoniae).